The sequence spans 856 residues: Structure-specific endonuclease subunit SLX4 (856 aa).

The span at 1–19 (MDNAAIASQSNTPPSNGRS) shows a compositional bias: polar residues. 9 disordered regions span residues 1-24 (MDNA…ARFV), 39-61 (IEPS…SKSP), 88-121 (VDSP…HKMA), 139-201 (KTRK…TDNE), 296-326 (GIQT…KKPQ), 362-392 (KKMG…GNGP), 621-640 (SKSS…SQGD), 653-688 (RSDS…SNEG), and 715-742 (DSVG…QDCD). The segment covering 51-60 (STLLTSLSKS) has biased composition (low complexity). Residues 139–152 (KTRKKKAATAKRTR) are compositionally biased toward basic residues. Residues 296–309 (GIQTPTESRPATND) are compositionally biased toward polar residues. Polar residues predominate over residues 673-686 (SVKSQESKSFSLSN).

The protein belongs to the SLX4 family. As to quaternary structure, forms a heterodimer with SLX1. In terms of processing, phosphorylated in response to DNA damage.

It localises to the nucleus. Regulatory subunit of the SLX1-SLX4 structure-specific endonuclease that resolves DNA secondary structures generated during DNA repair and recombination. Has endonuclease activity towards branched DNA substrates, introducing single-strand cuts in duplex DNA close to junctions with ss-DNA. The sequence is that of Structure-specific endonuclease subunit SLX4 from Ajellomyces dermatitidis (strain ER-3 / ATCC MYA-2586) (Blastomyces dermatitidis).